A 240-amino-acid chain; its full sequence is MSSEQLQDPVEPDKILSAVTQRGLRLESILTTHHHLDHAGGNLDLVTKCRKQGLEGLKVYGGDDRIGGLTDTVSHGYKXRLVATSTFIAWLHHRHTTGHICYLVTEENSTKEGAVFTGDTLFLGGCGRFFEGTAEQMFKALIEVLSKLPTTTKVYCGHEYTVKNLEFGLTVEPKNEALKHRLEAVKRLRASNQASVPGTIGEELATNPLMRVSEPDVLAHAKTTDPIKAMKTIREEKDRF.

His-33, His-35, Asp-37, His-38, His-95, and Asp-119 together coordinate Zn(2+). Residues Arg-128, 158–160 (HEY), and 234–237 (REEK) each bind substrate. His-158 is a binding site for Zn(2+).

Belongs to the metallo-beta-lactamase superfamily. Glyoxalase II family. Zn(2+) is required as a cofactor.

It carries out the reaction an S-(2-hydroxyacyl)glutathione + H2O = a 2-hydroxy carboxylate + glutathione + H(+). It participates in secondary metabolite metabolism; methylglyoxal degradation; (R)-lactate from methylglyoxal: step 2/2. Thiolesterase that catalyzes the hydrolysis of S-D-lactoyl-glutathione to form glutathione and D-lactic acid. This Schistosoma mansoni (Blood fluke) protein is Probable hydroxyacylglutathione hydrolase.